The following is a 631-amino-acid chain: 1-deoxy-D-xylulose-5-phosphate synthase (631 aa).

Thiamine diphosphate-binding positions include His-73 and Gly-114 to Ser-116. Mg(2+) is bound at residue Asp-145. Residues Gly-146–Ala-147, Asn-174, Tyr-285, and Glu-366 contribute to the thiamine diphosphate site. Asn-174 lines the Mg(2+) pocket.

It belongs to the transketolase family. DXPS subfamily. In terms of assembly, homodimer. Mg(2+) serves as cofactor. The cofactor is thiamine diphosphate.

The enzyme catalyses D-glyceraldehyde 3-phosphate + pyruvate + H(+) = 1-deoxy-D-xylulose 5-phosphate + CO2. Its pathway is metabolic intermediate biosynthesis; 1-deoxy-D-xylulose 5-phosphate biosynthesis; 1-deoxy-D-xylulose 5-phosphate from D-glyceraldehyde 3-phosphate and pyruvate: step 1/1. Functionally, catalyzes the acyloin condensation reaction between C atoms 2 and 3 of pyruvate and glyceraldehyde 3-phosphate to yield 1-deoxy-D-xylulose-5-phosphate (DXP). This chain is 1-deoxy-D-xylulose-5-phosphate synthase, found in Desulfitobacterium hafniense (strain Y51).